A 192-amino-acid polypeptide reads, in one-letter code: Urease accessory protein UreE (192 aa).

Positions 170-192 (EHHGHSHSHSHDHVHDEKCGHKH) are disordered. Positions 178–192 (HSHDHVHDEKCGHKH) are enriched in basic and acidic residues.

It belongs to the UreE family.

The protein resides in the cytoplasm. In terms of biological role, involved in urease metallocenter assembly. Binds nickel. Probably functions as a nickel donor during metallocenter assembly. In Cupriavidus necator (strain ATCC 17699 / DSM 428 / KCTC 22496 / NCIMB 10442 / H16 / Stanier 337) (Ralstonia eutropha), this protein is Urease accessory protein UreE.